The primary structure comprises 550 residues: Chaperonin GroEL 2 (550 aa).

Residues T30–P33, K51, D87–T91, G415, and D496 each bind ATP.

It belongs to the chaperonin (HSP60) family. Forms a cylinder of 14 subunits composed of two heptameric rings stacked back-to-back. Interacts with the co-chaperonin GroES.

The protein localises to the cytoplasm. It catalyses the reaction ATP + H2O + a folded polypeptide = ADP + phosphate + an unfolded polypeptide.. Together with its co-chaperonin GroES, plays an essential role in assisting protein folding. The GroEL-GroES system forms a nano-cage that allows encapsulation of the non-native substrate proteins and provides a physical environment optimized to promote and accelerate protein folding. The protein is Chaperonin GroEL 2 of Bradyrhizobium diazoefficiens (strain JCM 10833 / BCRC 13528 / IAM 13628 / NBRC 14792 / USDA 110).